The sequence spans 525 residues: Serine/threonine protein phosphatase 2A 55 kDa regulatory subunit B beta isoform (525 aa).

Positions 1-30 are disordered; sequence MDPSSKSPDDDDLRPEAEAARRPQPQPQPR. WD repeat units lie at residues 48–87 and 124–165; these read QEVDIISAIEFDKSGDHLATGDRGGRVVLFERTDSRDSAS and EIEE…VKRI. Positions 169-191 are disordered; that stretch reads NLNTSQSSGNGTTSSSSSSSSRA. Residues 171-189 show a composition bias toward low complexity; it reads NTSQSSGNGTTSSSSSSSS. 4 WD repeats span residues 244 to 282, 293 to 333, 352 to 390, and 495 to 525; these read AHDYHINSISNNSDGETYISADDLRINLWNLEISNQSFN, DLTE…LCDN, EIIASVSDIKFARDGRHILSRDYMTLKLWDINMDSGPVA, and DLSTKLLHLAWHPTENSIACAAANSLYMYYA.

Belongs to the phosphatase 2A regulatory subunit B family. PP2A consists of a common heteromeric enzyme, composed of a catalytic subunit (subunits C), a constant regulatory subunit (subunit A), and a variety of regulatory subunits such as subunits B (the R2/B/PR55/B55, R3/B''/PR72/PR130/PR59 and R5/B'/B56 families).

In terms of biological role, the B regulatory subunit may modulate substrate selectivity and catalytic activity, and may also direct the localization of the catalytic enzyme to a particular subcellular compartment. The protein is Serine/threonine protein phosphatase 2A 55 kDa regulatory subunit B beta isoform of Oryza sativa subsp. japonica (Rice).